Here is a 184-residue protein sequence, read N- to C-terminus: Ras protein let-60 (184 aa).

Position 10-17 (10-17) interacts with GTP; it reads GDGGVGKS. Residues 32-40 carry the Effector region motif; sequence YDPTIEDSY. Residues 57-61 and 116-119 each bind GTP; these read DTAGQ and NKCD. The residue at position 181 (Cys-181) is a Cysteine methyl ester. The S-farnesyl cysteine moiety is linked to residue Cys-181. Residues 182 to 184 constitute a propeptide, removed in mature form; that stretch reads QIM.

The protein belongs to the small GTPase superfamily. Ras family. In terms of assembly, interacts with soc-2. Interacts (in GTP-bound form) with plc-1 (via Ras-associating domain 1). Expressed in body wall muscles and in the nervous system including ganglion, nerve ring dorsal and ventral nerve cords, motor neurons and sensory tail neurons.

It is found in the cell membrane. It carries out the reaction GTP + H2O = GDP + phosphate + H(+). In terms of biological role, GTP-binding protein with GTPase activity. The level of let-60 controls the switch between vulval and hypodermal cell fates during C.elegans vulval induction. May stimulate the guanine nucleotide exchange factor (GEF) activity of rap-1. May induce nuclear condensation. This is Ras protein let-60 from Caenorhabditis elegans.